A 313-amino-acid chain; its full sequence is MLDKIIRIATRQSPLALWQAHYVQHLLQANHPGLQIELVPMVTRGDIILDTPLAKVGGKGLFVKELELALLDGRADIAVHSMKDVPIAFPEGLGLVTICEREDPRDAFVSSHYAHLDDLPAGSVVGTSSLRRQCQLRERRPDLIIRDLRGNVGTRLAKLDNGDYQAIILAVAGLKRLGLENRIRYAMSAEESLPAVGQGAVGIECRLDDDHTRQLLAPLNHRHTELRVCAERAMNIRLEGGCQVPIGSYAELEGDTLWLRALVGAPDGSQMIRGERRGPAAEAEQMGIELADELLSLGAREILAAVYLDNPAR.

Cys-242 carries the post-translational modification S-(dipyrrolylmethanemethyl)cysteine.

The protein belongs to the HMBS family. As to quaternary structure, monomer. Dipyrromethane serves as cofactor.

The enzyme catalyses 4 porphobilinogen + H2O = hydroxymethylbilane + 4 NH4(+). Its pathway is porphyrin-containing compound metabolism; protoporphyrin-IX biosynthesis; coproporphyrinogen-III from 5-aminolevulinate: step 2/4. Functionally, tetrapolymerization of the monopyrrole PBG into the hydroxymethylbilane pre-uroporphyrinogen in several discrete steps. The protein is Porphobilinogen deaminase of Yersinia pestis bv. Antiqua (strain Angola).